The sequence spans 93 residues: Small ribosomal subunit protein uS19 (93 aa).

This sequence belongs to the universal ribosomal protein uS19 family.

Its function is as follows. Protein S19 forms a complex with S13 that binds strongly to the 16S ribosomal RNA. The protein is Small ribosomal subunit protein uS19 of Karelsulcia muelleri (strain GWSS) (Sulcia muelleri).